Consider the following 265-residue polypeptide: Large ribosomal subunit protein eL8 (265 aa).

It belongs to the eukaryotic ribosomal protein eL8 family. Interacts with cmd-1 in the presence of Ca(2+).

This chain is Large ribosomal subunit protein eL8, found in Caenorhabditis elegans.